Reading from the N-terminus, the 329-residue chain is DNA-directed RNA polymerase subunit alpha (329 aa).

Positions 1-235 (MVREKVKVST…DLFIPFLHTE (235 aa)) are alpha N-terminal domain (alpha-NTD). The segment at 269-329 (IALKYIFIDQ…KQILGILEKK (61 aa)) is alpha C-terminal domain (alpha-CTD).

This sequence belongs to the RNA polymerase alpha chain family. As to quaternary structure, in plastids the minimal PEP RNA polymerase catalytic core is composed of four subunits: alpha, beta, beta', and beta''. When a (nuclear-encoded) sigma factor is associated with the core the holoenzyme is formed, which can initiate transcription.

Its subcellular location is the plastid. It localises to the chloroplast. The enzyme catalyses RNA(n) + a ribonucleoside 5'-triphosphate = RNA(n+1) + diphosphate. DNA-dependent RNA polymerase catalyzes the transcription of DNA into RNA using the four ribonucleoside triphosphates as substrates. This chain is DNA-directed RNA polymerase subunit alpha, found in Gossypium hirsutum (Upland cotton).